The primary structure comprises 368 residues: Ubiquitin domain-containing protein UBFD1 (368 aa).

Positions 106–139 (SCDARGNLQPAPAQPPGDPAAQASVSNGEDAGGG) are disordered. The region spanning 143-218 (ELVDLKIIWN…IMVVGSTIND (76 aa)) is the Ubiquitin-like domain. Positions 231–263 (QDAKAEENKKEPLCRQKQHRKVLDKGKPEDVMP) are disordered. 2 stretches are compositionally biased toward basic and acidic residues: residues 233-244 (AKAEENKKEPLC) and 251-260 (KVLDKGKPED).

The chain is Ubiquitin domain-containing protein UBFD1 (Ubfd1) from Mus musculus (Mouse).